The chain runs to 1012 residues: Cellulose synthase-like protein D5 (1012 aa).

The interval 1-81 (MSVDYANYTV…ARVPAPSSNK (81 aa)) is disordered. A compositionally biased stretch (low complexity) spans 20–37 (PSGGAPPAAPSAGGARPG). The segment covering 57-69 (GGGDDGAKMDRRL) has biased composition (basic and acidic residues). A run of 2 helical transmembrane segments spans residues 150-170 (ILSP…LFLV) and 180-200 (ALWL…SWLL). The active site involves aspartate 280. The interval 597 to 620 (PRQGSEAMPGAGGGRSGGGSVGGD) is disordered. Over residues 606 to 618 (GAGGGRSGGGSVG) the composition is skewed to gly residues. Aspartate 717 is an active-site residue. A run of 6 helical transmembrane segments spans residues 799-819 (LFLI…QFIV), 825-845 (TFLS…LLEV), 871-891 (LAAV…SFTL), 914-934 (SLFI…VVGV), 948-968 (LLGG…FAKG), and 978-998 (TIVY…WITI).

Belongs to the glycosyltransferase 2 family. Plant cellulose synthase-like D subfamily.

Its subcellular location is the golgi apparatus membrane. Functionally, thought to be a Golgi-localized beta-glycan synthase that polymerize the backbones of noncellulosic polysaccharides (hemicelluloses) of plant cell wall. In Oryza sativa subsp. japonica (Rice), this protein is Cellulose synthase-like protein D5 (CSLD5).